A 599-amino-acid polypeptide reads, in one-letter code: Protein linkin (599 aa).

A signal peptide spans 1–19; it reads MKKILPIIWLINLVSGSLS. The Extracellular segment spans residues 20 to 553; that stretch reads LEKKAPDLLG…SRLYVTPSAL (534 aa). Residues asparagine 50, asparagine 117, asparagine 163, asparagine 361, and asparagine 378 are each glycosylated (N-linked (GlcNAc...) asparagine). A helical transmembrane segment spans residues 554-574; sequence IVQSLAVIALVCCMLLMVVVF. Over 575–599 the chain is Cytoplasmic; that stretch reads LHYREKKEDRYERQQQSHRFHFDAM.

This sequence belongs to the TIP family. In terms of tissue distribution, expressed in all somatic gonadal cells including distal tip cells, anchor cell, uterine precursor cells and spermatheca precursor cells of the hermaphrodite. Also expressed in the pharynx, pharyngeal-intestinal valve, intestine, excretory cell and canal, seam cells, a subset of hypodermal cells, vulval precursor cells of the hermaphrodite and hook precursor cells in the male.

It localises to the apical cell membrane. Its subcellular location is the lateral cell membrane. In terms of biological role, probable cell adhesion protein involved in gonadal cell migration. The polypeptide is Protein linkin (Caenorhabditis elegans).